Consider the following 263-residue polypeptide: Glutamate 5-kinase (263 aa).

K15 is an ATP binding site. Substrate is bound by residues S55, D142, and N154. ATP contacts are provided by residues 174–175 (SD) and 216–222 (TGGIETK).

The protein belongs to the glutamate 5-kinase family.

It localises to the cytoplasm. It catalyses the reaction L-glutamate + ATP = L-glutamyl 5-phosphate + ADP. The protein operates within amino-acid biosynthesis; L-proline biosynthesis; L-glutamate 5-semialdehyde from L-glutamate: step 1/2. In terms of biological role, catalyzes the transfer of a phosphate group to glutamate to form L-glutamate 5-phosphate. The chain is Glutamate 5-kinase from Alkaliphilus oremlandii (strain OhILAs) (Clostridium oremlandii (strain OhILAs)).